Consider the following 232-residue polypeptide: 5'-methylthioadenosine/S-adenosylhomocysteine nucleosidase (232 aa).

Glutamate 12 (proton acceptor) is an active-site residue. Residues glycine 78, valine 152, and methionine 173–glutamate 174 contribute to the substrate site. The active-site Proton donor is aspartate 197.

The protein belongs to the PNP/UDP phosphorylase family. MtnN subfamily. Homodimer.

The enzyme catalyses S-adenosyl-L-homocysteine + H2O = S-(5-deoxy-D-ribos-5-yl)-L-homocysteine + adenine. It carries out the reaction S-methyl-5'-thioadenosine + H2O = 5-(methylsulfanyl)-D-ribose + adenine. The catalysed reaction is 5'-deoxyadenosine + H2O = 5-deoxy-D-ribose + adenine. The protein operates within amino-acid biosynthesis; L-methionine biosynthesis via salvage pathway; S-methyl-5-thio-alpha-D-ribose 1-phosphate from S-methyl-5'-thioadenosine (hydrolase route): step 1/2. Its function is as follows. Catalyzes the irreversible cleavage of the glycosidic bond in both 5'-methylthioadenosine (MTA) and S-adenosylhomocysteine (SAH/AdoHcy) to adenine and the corresponding thioribose, 5'-methylthioribose and S-ribosylhomocysteine, respectively. Also cleaves 5'-deoxyadenosine, a toxic by-product of radical S-adenosylmethionine (SAM) enzymes, into 5-deoxyribose and adenine. Thus, is required for in vivo function of the radical SAM enzymes biotin synthase and lipoic acid synthase, that are inhibited by 5'-deoxyadenosine accumulation. The sequence is that of 5'-methylthioadenosine/S-adenosylhomocysteine nucleosidase from Buchnera aphidicola subsp. Acyrthosiphon pisum (strain APS) (Acyrthosiphon pisum symbiotic bacterium).